The sequence spans 262 residues: Acyl-[acyl-carrier-protein]--UDP-N-acetylglucosamine O-acyltransferase (262 aa).

The protein belongs to the transferase hexapeptide repeat family. LpxA subfamily. Homotrimer.

It localises to the cytoplasm. It carries out the reaction a (3R)-hydroxyacyl-[ACP] + UDP-N-acetyl-alpha-D-glucosamine = a UDP-3-O-[(3R)-3-hydroxyacyl]-N-acetyl-alpha-D-glucosamine + holo-[ACP]. Its pathway is glycolipid biosynthesis; lipid IV(A) biosynthesis; lipid IV(A) from (3R)-3-hydroxytetradecanoyl-[acyl-carrier-protein] and UDP-N-acetyl-alpha-D-glucosamine: step 1/6. Functionally, involved in the biosynthesis of lipid A, a phosphorylated glycolipid that anchors the lipopolysaccharide to the outer membrane of the cell. The sequence is that of Acyl-[acyl-carrier-protein]--UDP-N-acetylglucosamine O-acyltransferase from Histophilus somni (strain 2336) (Haemophilus somnus).